Consider the following 512-residue polypeptide: Cytokinin hydroxylase (512 aa).

The chain crosses the membrane as a helical span at residues 2-22 (MVTLVLKYVLVIVMTLILRVL). Residue C458 participates in heme binding.

The protein belongs to the cytochrome P450 family. The cofactor is heme. Specifically expressed in roots.

Its subcellular location is the membrane. It carries out the reaction N(6)-(dimethylallyl)adenosine 5'-phosphate + NADPH + O2 + H(+) = 9-ribosyl-trans-zeatin 5'-phosphate + NADP(+) + H2O. It catalyses the reaction N(6)-(dimethylallyl)adenosine 5'-diphosphate + NADPH + O2 + H(+) = 9-ribosyl-trans-zeatin 5'-diphosphate + NADP(+) + H2O. The enzyme catalyses N(6)-(dimethylallyl)adenosine 5'-triphosphate + NADPH + O2 + H(+) = 9-ribosyl-trans-zeatin 5'-triphosphate + NADP(+) + H2O. Its function is as follows. Cytokinin hydroxylase that catalyzes the biosynthesis of trans-zeatin via the isopentenyladenine riboside 5'-monophosphate (iPRMP)-dependent pathway. Can use isopentenyladenosine-5'-monophosphate, isopentenyladenosine-5'-diphosphate and isopentenyladenosine-5'-triphosphate as substrate. This is Cytokinin hydroxylase (CYP735A2) from Arabidopsis thaliana (Mouse-ear cress).